The sequence spans 114 residues: Ghrelin (114 aa).

The N-terminal stretch at 1–24 (MNFGKAAIFGVVLFCLLWTEGAQA) is a signal peptide. The O-decanoyl threonine; alternate moiety is linked to residue T27. T27 carries the O-octanoyl threonine; alternate lipid modification. Positions 55 to 114 (GVEDDLAGEEIGVTFPLDMKMTQEQFQKQRAAVQDFLYSSLLSLGSVQDTEDKNENPQSQ) are cleaved as a propeptide — removed in mature form.

Belongs to the motilin family. In terms of processing, O-octanoylated by GOAT/MBOAT4. O-octanoylation or O-decanoylation is essential for activity. The O-decanoylated form ghrelin-27-C10 differs in the length of the carbon backbone of the carboxylic acid bound to Thr-27. 33% of frog ghrelin is O-decanoylated. 80% of frog ghrelin has Asn-52 cleaved from its C-terminus giving rise to ghrelin-27. High levels in stomach. Moderate levels in small intestine, pancreas and testis. Low levels in heart, lung and gall bladder.

The protein resides in the secreted. Functionally, ligand for growth hormone secretagogue receptor type 1 (GHSR). Induces the release of growth hormone from the pituitary. Has an appetite-stimulating effect, induces adiposity and stimulates gastric acid secretion. Involved in growth regulation. In Aquarana catesbeiana (American bullfrog), this protein is Ghrelin (GHRL).